A 311-amino-acid chain; its full sequence is Methionyl-tRNA formyltransferase (311 aa).

110-113 (SLLP) is a (6S)-5,6,7,8-tetrahydrofolate binding site.

It belongs to the Fmt family.

It catalyses the reaction L-methionyl-tRNA(fMet) + (6R)-10-formyltetrahydrofolate = N-formyl-L-methionyl-tRNA(fMet) + (6S)-5,6,7,8-tetrahydrofolate + H(+). In terms of biological role, attaches a formyl group to the free amino group of methionyl-tRNA(fMet). The formyl group appears to play a dual role in the initiator identity of N-formylmethionyl-tRNA by promoting its recognition by IF2 and preventing the misappropriation of this tRNA by the elongation apparatus. This Streptococcus pyogenes serotype M6 (strain ATCC BAA-946 / MGAS10394) protein is Methionyl-tRNA formyltransferase.